A 171-amino-acid chain; its full sequence is Galectin-related protein (171 aa).

Residues 38–170 (PFCGHIKGGM…INGDLQLTKL (133 aa)) form the Galectin domain.

Functionally, does not bind lactose, and may not bind carbohydrates. In Xenopus tropicalis (Western clawed frog), this protein is Galectin-related protein (lgalsl).